We begin with the raw amino-acid sequence, 213 residues long: Imidazole glycerol phosphate synthase subunit HisH (213 aa).

In terms of domain architecture, Glutamine amidotransferase type-1 spans Met-1–Ala-212. Cys-79 (nucleophile) is an active-site residue. Active-site residues include His-187 and Glu-189.

As to quaternary structure, heterodimer of HisH and HisF.

It localises to the cytoplasm. The catalysed reaction is 5-[(5-phospho-1-deoxy-D-ribulos-1-ylimino)methylamino]-1-(5-phospho-beta-D-ribosyl)imidazole-4-carboxamide + L-glutamine = D-erythro-1-(imidazol-4-yl)glycerol 3-phosphate + 5-amino-1-(5-phospho-beta-D-ribosyl)imidazole-4-carboxamide + L-glutamate + H(+). It carries out the reaction L-glutamine + H2O = L-glutamate + NH4(+). It participates in amino-acid biosynthesis; L-histidine biosynthesis; L-histidine from 5-phospho-alpha-D-ribose 1-diphosphate: step 5/9. Its function is as follows. IGPS catalyzes the conversion of PRFAR and glutamine to IGP, AICAR and glutamate. The HisH subunit catalyzes the hydrolysis of glutamine to glutamate and ammonia as part of the synthesis of IGP and AICAR. The resulting ammonia molecule is channeled to the active site of HisF. This is Imidazole glycerol phosphate synthase subunit HisH from Nitratidesulfovibrio vulgaris (strain ATCC 29579 / DSM 644 / CCUG 34227 / NCIMB 8303 / VKM B-1760 / Hildenborough) (Desulfovibrio vulgaris).